Reading from the N-terminus, the 370-residue chain is 3-dehydroquinate synthase (370 aa).

NAD(+) is bound by residues 112–116 (GVIGD), 136–137 (TT), Lys-149, Lys-158, and 176–179 (TLAT). Residues Glu-191, His-254, and His-276 each contribute to the Zn(2+) site.

The protein belongs to the sugar phosphate cyclases superfamily. Dehydroquinate synthase family. It depends on Co(2+) as a cofactor. Requires Zn(2+) as cofactor. The cofactor is NAD(+).

The protein resides in the cytoplasm. The catalysed reaction is 7-phospho-2-dehydro-3-deoxy-D-arabino-heptonate = 3-dehydroquinate + phosphate. The protein operates within metabolic intermediate biosynthesis; chorismate biosynthesis; chorismate from D-erythrose 4-phosphate and phosphoenolpyruvate: step 2/7. Functionally, catalyzes the conversion of 3-deoxy-D-arabino-heptulosonate 7-phosphate (DAHP) to dehydroquinate (DHQ). The polypeptide is 3-dehydroquinate synthase (Xylella fastidiosa (strain M12)).